Reading from the N-terminus, the 212-residue chain is Uridine kinase (212 aa).

Gly13–Thr20 is an ATP binding site.

The protein belongs to the uridine kinase family.

It is found in the cytoplasm. The catalysed reaction is uridine + ATP = UMP + ADP + H(+). It carries out the reaction cytidine + ATP = CMP + ADP + H(+). It functions in the pathway pyrimidine metabolism; CTP biosynthesis via salvage pathway; CTP from cytidine: step 1/3. Its pathway is pyrimidine metabolism; UMP biosynthesis via salvage pathway; UMP from uridine: step 1/1. The polypeptide is Uridine kinase (Bacillus thuringiensis (strain Al Hakam)).